The sequence spans 416 residues: Histidine--tRNA ligase (416 aa).

The protein belongs to the class-II aminoacyl-tRNA synthetase family. Homodimer.

The protein resides in the cytoplasm. The catalysed reaction is tRNA(His) + L-histidine + ATP = L-histidyl-tRNA(His) + AMP + diphosphate + H(+). The sequence is that of Histidine--tRNA ligase from Clostridium novyi (strain NT).